Here is a 279-residue protein sequence, read N- to C-terminus: Movement protein (279 aa).

This sequence belongs to the cucumovirus movement protein family.

Its subcellular location is the host cell junction. The protein localises to the host plasmodesma. Transports viral genome to neighboring plant cells directly through plasmosdesmata, without any budding. The movement protein allows efficient cell to cell propagation, by bypassing the host cell wall barrier. Acts by forming a tubular structure at the host plasmodesmata, enlarging it enough to allow free passage of virion capsids. The sequence is that of Movement protein from Cucumber mosaic virus (strain Kin) (CMV).